A 466-amino-acid chain; its full sequence is MVRILTKKSFALSALVAASLMASGAMASDKTEPRNEQYKDKFSKQYNSWHETSESVEITDALEQDPNLVILWAGYGFAKDYNKARGHMYAVTDLRNTLRTGAPKKDTDGPMPMACWSCKSPDVPRMIEEQGEDGYFSGKWYKGGAEIVNTIGCSDCHEKGKSKLRISRPFAERGMEAIGTPFDKASRKDKQSMVCGQCHVEYYFEKTADKKGFVKFPWDKGTTVEDMEAYYDAIDFADWTHKVSKTPMLKAQHPGYETWQLGMHGKNNVSCTDCHMPKVKNAEGRKFTDHKVGNPFDRFEETCGNCHDQSKEFMVNLDKERKAKVKEIQLRAENQLVKAHFEAGAAWKAGATEAEMKPILTDIRHAQWRWDYAIASHGVASHAPDEALRVLGTAVDKAADARVKLAQLLAKKGVPQPIALPDISTKAKAQAALGMDMKKMNADKEEFKKTVLPKWDAEAKKREATY.

A signal peptide spans 1 to 27 (MVRILTKKSFALSALVAASLMASGAMA). Histidine 87 contributes to the heme c binding site. Residues cysteine 115, cysteine 118, and lysine 119 each coordinate heme. Residues cysteine 153, cysteine 156, histidine 157, cysteine 195, cysteine 198, and histidine 199 each coordinate heme c. The Ca(2+) site is built by glutamate 201, tyrosine 202, lysine 250, and glutamine 252. Substrate is bound at residue tyrosine 202. Residue histidine 253 participates in substrate binding. Heme c contacts are provided by histidine 264, cysteine 271, cysteine 274, histidine 275, histidine 290, cysteine 303, cysteine 306, histidine 307, and histidine 382.

It belongs to the cytochrome c-552 family. The cofactor is Ca(2+). Heme c is required as a cofactor.

The protein resides in the periplasm. The catalysed reaction is 6 Fe(III)-[cytochrome c] + NH4(+) + 2 H2O = 6 Fe(II)-[cytochrome c] + nitrite + 8 H(+). The protein operates within nitrogen metabolism; nitrate reduction (assimilation). Catalyzes the reduction of nitrite to ammonia, consuming six electrons in the process. The chain is Cytochrome c-552 from Shewanella woodyi (strain ATCC 51908 / MS32).